The primary structure comprises 454 residues: Lipase member H (454 aa).

The N-terminal stretch at 1–23 (MIYRKIIWGILYVTLMLFDTHRA) is a signal peptide. N-linked (GlcNAc...) asparagine glycans are attached at residues asparagine 73, asparagine 137, and asparagine 151. The active-site Nucleophile is serine 161. The Charge relay system role is filled by aspartate 185. An intrachain disulfide couples cysteine 240 to cysteine 253. The active-site Charge relay system is histidine 255. A glycan (N-linked (GlcNAc...) asparagine) is linked at asparagine 267. Intrachain disulfides connect cysteine 277-cysteine 288 and cysteine 291-cysteine 299. Residue asparagine 358 is glycosylated (N-linked (GlcNAc...) asparagine). The cysteines at positions 430 and 449 are disulfide-linked.

Belongs to the AB hydrolase superfamily. Lipase family.

Its subcellular location is the secreted. The protein localises to the cell membrane. It catalyses the reaction 1-hexadecanoyl-2-(9Z-octadecenoyl)-sn-glycero-3-phosphate + H2O = 2-(9Z-octadecenoyl)-sn-glycero-3-phosphate + hexadecanoate + H(+). In terms of biological role, hydrolyzes specifically phosphatidic acid (PA) to produce 2-acyl lysophosphatidic acid (LPA; a potent bioactive lipid mediator) and fatty acid. Does not hydrolyze other phospholipids, like phosphatidylserine (PS), phosphatidylcholine (PC) and phosphatidylethanolamine (PE) or triacylglycerol (TG). This Danio rerio (Zebrafish) protein is Lipase member H (liph).